The sequence spans 352 residues: tRNA uridine(34) hydroxylase (352 aa).

Residues 144–238 (SDPDVILIDT…YLEEVPASDS (95 aa)) form the Rhodanese domain. Catalysis depends on Cys-198, which acts as the Cysteine persulfide intermediate.

This sequence belongs to the TrhO family.

The catalysed reaction is uridine(34) in tRNA + AH2 + O2 = 5-hydroxyuridine(34) in tRNA + A + H2O. Catalyzes oxygen-dependent 5-hydroxyuridine (ho5U) modification at position 34 in tRNAs. This is tRNA uridine(34) hydroxylase from Psychrobacter arcticus (strain DSM 17307 / VKM B-2377 / 273-4).